Consider the following 83-residue polypeptide: MVTIRLARGGAKKRPFYNIVVADSRNARDGRFIERVGFFNPLARGQEETLRLDLARVEHWVSNGAAATERVAKLIKDARKATA.

The protein belongs to the bacterial ribosomal protein bS16 family.

This chain is Small ribosomal subunit protein bS16, found in Shewanella baltica (strain OS223).